The primary structure comprises 28 residues: fur leader peptide (28 aa).

Its function is as follows. Cotranscribed with fur, it is essential for fur translation. The fur ribosomal binding site (RBS) is occluded by the 5'-mRNA secondary structure, which is opened by uof translation. The sequence is that of fur leader peptide (uof) from Escherichia coli (strain K12).